The primary structure comprises 362 residues: MSQAALRIVEGSSMDKSKALSAALSQIERQFGKGSVMKLGKNDKSMDVEVISSGSLGLDIALGVGGLPKGRIVEVYGPESSGKTTLALHAVAEAQKKGGICAFIDAEHALDPVYARKLGVNVDDLLISQPDHGEQALEIADTLVRSGAVDVLIIDSVAALVPRAELEGEMGDALPGLQARLMSQALRKLTASINKSNTMVIFINQIRMKIGVMYGSPETTTGGNALKFYASVRLDIRRIGAIKERDEVVGNQTRVKVVKNKLAPPFKQVEFDIMYGEGISKMGEILDLGVKAGIVEKSGAWFSYDSQRMGQGRENAKAFLRANPDITAKVEMAIRQNSGLIAEQILAGSPERETDDDETAED.

77-84 (GPESSGKT) lines the ATP pocket.

It belongs to the RecA family.

It is found in the cytoplasm. In terms of biological role, can catalyze the hydrolysis of ATP in the presence of single-stranded DNA, the ATP-dependent uptake of single-stranded DNA by duplex DNA, and the ATP-dependent hybridization of homologous single-stranded DNAs. It interacts with LexA causing its activation and leading to its autocatalytic cleavage. The chain is Protein RecA from Nitrobacter winogradskyi (strain ATCC 25391 / DSM 10237 / CIP 104748 / NCIMB 11846 / Nb-255).